The sequence spans 361 residues: 3-dehydroquinate synthase (361 aa).

Residues 69–74 (DGEEYK), 103–107 (GVIGD), 127–128 (TT), Lys140, Lys149, and 167–170 (TLDT) contribute to the NAD(+) site. Zn(2+) contacts are provided by Glu182, His245, and His262.

The protein belongs to the sugar phosphate cyclases superfamily. Dehydroquinate synthase family. It depends on Co(2+) as a cofactor. Zn(2+) is required as a cofactor. Requires NAD(+) as cofactor.

Its subcellular location is the cytoplasm. It catalyses the reaction 7-phospho-2-dehydro-3-deoxy-D-arabino-heptonate = 3-dehydroquinate + phosphate. It functions in the pathway metabolic intermediate biosynthesis; chorismate biosynthesis; chorismate from D-erythrose 4-phosphate and phosphoenolpyruvate: step 2/7. Its function is as follows. Catalyzes the conversion of 3-deoxy-D-arabino-heptulosonate 7-phosphate (DAHP) to dehydroquinate (DHQ). This Thioalkalivibrio sulfidiphilus (strain HL-EbGR7) protein is 3-dehydroquinate synthase.